We begin with the raw amino-acid sequence, 102 residues long: Small ribosomal subunit protein eS24 (102 aa).

The protein belongs to the eukaryotic ribosomal protein eS24 family.

In Methanobrevibacter smithii (strain ATCC 35061 / DSM 861 / OCM 144 / PS), this protein is Small ribosomal subunit protein eS24.